The chain runs to 358 residues: MRMTFRWYGENNDSVTLEQIKQIPGVEGLVWALHDKVAGEVWPLEDIMQVKEQADRYGFHLDVVESINVHEDIKLGLPTRDAYIENYKESIRNVAKVGAKVICYNFMPVFDWTRTDLFKEMEDGSTALFYEKAKVDNMDPRELVRQTTSNAAFTMPGWEPERLAHIEKSLKAYENVTEDDLWEHLQYFLEQVLPVAEEHGIQMAIHPDDPPWSVFGLPRIITSEAAVERFLQLSNSPAHGITLCSGSLGANPENDIPKIIRRFHDRIPFAHIRNVKIYENGDFIETSHRSQDGSVNIADVVKAYHENGFTGYVRPDHGRHIWNEKCRPGYGLYDRALGIMHLWGLWDAYELEAKRRQS.

This sequence belongs to the mannonate dehydratase family. Fe(2+) serves as cofactor. Requires Mn(2+) as cofactor.

The catalysed reaction is D-mannonate = 2-dehydro-3-deoxy-D-gluconate + H2O. It functions in the pathway carbohydrate metabolism; pentose and glucuronate interconversion. Catalyzes the dehydration of D-mannonate. This chain is Mannonate dehydratase, found in Shouchella clausii (strain KSM-K16) (Alkalihalobacillus clausii).